Reading from the N-terminus, the 314-residue chain is tRNA pseudouridine synthase B (314 aa).

H43 is a substrate binding site. D48 functions as the Nucleophile in the catalytic mechanism. Substrate-binding residues include Y76, Y179, and L200.

This sequence belongs to the pseudouridine synthase TruB family. Type 1 subfamily.

The catalysed reaction is uridine(55) in tRNA = pseudouridine(55) in tRNA. Its function is as follows. Responsible for synthesis of pseudouridine from uracil-55 in the psi GC loop of transfer RNAs. This chain is tRNA pseudouridine synthase B, found in Salmonella choleraesuis (strain SC-B67).